The chain runs to 234 residues: Sugar fermentation stimulation protein homolog (234 aa).

Belongs to the SfsA family.

This chain is Sugar fermentation stimulation protein homolog, found in Edwardsiella ictaluri (strain 93-146).